Here is a 606-residue protein sequence, read N- to C-terminus: Membrane protein insertase YidC (606 aa).

A helical membrane pass occupies residues 8–28; that stretch reads LILATALSFLVILVWFLLFPP. The span at 59–78 shows a compositional bias: low complexity; that stretch reads TEAAPGAAPQTAATPTENAP. The segment at 59-79 is disordered; sequence TEAAPGAAPQTAATPTENAPR. Helical transmembrane passes span 378 to 398, 448 to 468, 506 to 526, and 542 to 562; these read MGVA…PLAW, LPIL…FVTI, SILA…SMWL, and IFAW…SGLI.

The protein belongs to the OXA1/ALB3/YidC family. Type 1 subfamily. Interacts with the Sec translocase complex via SecD. Specifically interacts with transmembrane segments of nascent integral membrane proteins during membrane integration.

Its subcellular location is the cell inner membrane. Functionally, required for the insertion and/or proper folding and/or complex formation of integral membrane proteins into the membrane. Involved in integration of membrane proteins that insert both dependently and independently of the Sec translocase complex, as well as at least some lipoproteins. Aids folding of multispanning membrane proteins. The chain is Membrane protein insertase YidC from Dinoroseobacter shibae (strain DSM 16493 / NCIMB 14021 / DFL 12).